The sequence spans 530 residues: Berberine bridge enzyme-like 4 (530 aa).

Positions 1-19 (MKGTLSVLCLVLLVSVLEA) are cleaved as a signal peptide. Residues Cys32 and Cys95 are joined by a disulfide bond. The N-linked (GlcNAc...) asparagine glycan is linked to Asn52. One can recognise an FAD-binding PCMH-type domain in the interval 73–247 (NYRKLLAIVA…LSWKINLVDV (175 aa)). The 6-(S-cysteinyl)-8alpha-(pros-histidyl)-FAD (His-Cys) cross-link spans 110–172 (HDYEGLSYMS…QTLAFPAGVC (63 aa)). 4 N-linked (GlcNAc...) asparagine glycosylation sites follow: Asn257, Asn292, Asn341, and Asn441.

This sequence belongs to the oxygen-dependent FAD-linked oxidoreductase family. The cofactor is FAD. In terms of processing, the FAD cofactor is bound via a bicovalent 6-S-cysteinyl, 8alpha-N1-histidyl FAD linkage.

It is found in the secreted. The protein localises to the cell wall. In terms of biological role, probable flavin-dependent oxidoreductase. The chain is Berberine bridge enzyme-like 4 from Arabidopsis thaliana (Mouse-ear cress).